Consider the following 397-residue polypeptide: MGFRTLDDVDVTGKRVLVRVDFNVPMSQGKVCDETRLKRHKETLLELQKRGAKLILLSHCGRPKGQGEPEFSLRPVVRVLEKIINQPVAFAPDCVGVAAQTAIEALQNGGLLLLENVRFHPGEEKNDCSFAEALAHNGDLYVNDAFSVSHRAHASVEGITHLLPSYAGRSLQCELQALEKGLDNPKRPVVALVGGAKVSSKLFVLNHLVEKVDYLVIGGGMANSFLAAQGVHIGKSLCEHALMQTIKKVIEKAQEYQCTLLLPVDAVVGFRFEKGAPHRLYDIGDIPDDGMILDIGTRSIAHINEVIDKAATLVWNGPLGVFEMSPFDQGTIAVARHAAECSLTGKCVSIAGGGDTVFALNHAGVANDFTYLSTAGGAFLEWMEGKVLPGIFALRQA.

Residues 21–23, Arg-36, 59–62, Arg-118, and Arg-151 each bind substrate; these read DFN and HCGR. ATP-binding positions include Lys-201, Glu-323, and 353 to 356; that span reads GGDT.

It belongs to the phosphoglycerate kinase family. In terms of assembly, monomer.

It is found in the cytoplasm. The catalysed reaction is (2R)-3-phosphoglycerate + ATP = (2R)-3-phospho-glyceroyl phosphate + ADP. It participates in carbohydrate degradation; glycolysis; pyruvate from D-glyceraldehyde 3-phosphate: step 2/5. This is Phosphoglycerate kinase from Bartonella quintana (strain Toulouse) (Rochalimaea quintana).